The chain runs to 446 residues: Methionine aminopeptidase 2-3 (446 aa).

Residues 14–116 are disordered; it reads ITDAGANGAD…ENRYRTTSEE (103 aa). Residues 61–76 are compositionally biased toward basic residues; it reads AKKKKNKKRKPKKKQP. Polar residues predominate over residues 86–96; it reads PLSQLFPNNSY. Positions 98–116 are enriched in basic and acidic residues; it reads KGEEVEYKDENRYRTTSEE. A substrate-binding site is contributed by histidine 199. The a divalent metal cation site is built by aspartate 219, aspartate 230, and histidine 299. Histidine 307 contacts substrate. The a divalent metal cation site is built by glutamate 332 and glutamate 427.

This sequence belongs to the peptidase M24A family. Methionine aminopeptidase eukaryotic type 2 subfamily. Co(2+) serves as cofactor. Requires Zn(2+) as cofactor. The cofactor is Mn(2+). It depends on Fe(2+) as a cofactor.

The protein resides in the cytoplasm. It catalyses the reaction Release of N-terminal amino acids, preferentially methionine, from peptides and arylamides.. In terms of biological role, cotranslationally removes the N-terminal methionine from nascent proteins. The N-terminal methionine is often cleaved when the second residue in the primary sequence is small and uncharged (Met-Ala-, Cys, Gly, Pro, Ser, Thr, or Val). The polypeptide is Methionine aminopeptidase 2-3 (Aspergillus fumigatus (strain CBS 144.89 / FGSC A1163 / CEA10) (Neosartorya fumigata)).